We begin with the raw amino-acid sequence, 140 residues long: FLYWCH family member 2 (140 aa).

Disordered regions lie at residues 1-39 (MPLPEPSEQEGESVKASQEPSPKPGTEVIPAAPRKPRKF) and 84-140 (HPEA…GKSL). Serine 21 carries the post-translational modification Phosphoserine. The segment covering 98–114 (PEQKRSRQDPGTDRTED) has biased composition (basic and acidic residues). The span at 118–127 (AAGPPEAAGE) shows a compositional bias: low complexity.

This chain is FLYWCH family member 2 (FLYWCH2), found in Homo sapiens (Human).